Consider the following 465-residue polypeptide: Pancreatic triacylglycerol lipase (465 aa).

A signal peptide spans 1–16 (MLLLWILSLFLETVAG). 2 disulfide bridges follow: Cys-20–Cys-26 and Cys-107–Cys-118. Ser-169 serves as the catalytic Nucleophile. The active-site Charge relay system is the Asp-193. Glu-204, Arg-207, Asp-209, and Asp-212 together coordinate Ca(2+). Cys-254 and Cys-278 are joined by a disulfide. The Charge relay system role is filled by His-280. Intrachain disulfides connect Cys-302-Cys-313 and Cys-316-Cys-321. N-linked (GlcNAc...) asparagine glycosylation is found at Asn-351, Asn-398, and Asn-425. Positions 355–465 (WRYRIAVTLS…EEVLLTLQPC (111 aa)) constitute a PLAT domain. Cys-449 and Cys-465 are disulfide-bonded.

This sequence belongs to the AB hydrolase superfamily. Lipase family. Forms a 1:1 stoichiometric complex with (pro)colipase/CLPS.

The protein resides in the secreted. It catalyses the reaction a triacylglycerol + H2O = a diacylglycerol + a fatty acid + H(+). The enzyme catalyses 1,2,3-tributanoylglycerol + H2O = dibutanoylglycerol + butanoate + H(+). It carries out the reaction 1,2,3-tri-(9Z-octadecenoyl)-glycerol + H2O = di-(9Z)-octadecenoylglycerol + (9Z)-octadecenoate + H(+). The catalysed reaction is all-trans-retinyl hexadecanoate + H2O = all-trans-retinol + hexadecanoate + H(+). It catalyses the reaction 1,2-di-(9Z-octadecenoyl)-glycerol + H2O = (9Z-octadecenoyl)-glycerol + (9Z)-octadecenoate + H(+). With respect to regulation, inhibited by bile salts, is reactivated by (pro)colipase/CLPS. Functionally, plays an important role in fat metabolism. It preferentially splits the esters of long-chain fatty acids at positions 1 and 3, producing mainly 2-monoacylglycerol and free fatty acids, and shows considerably higher activity against insoluble emulsified substrates than against soluble ones. The polypeptide is Pancreatic triacylglycerol lipase (PNLIP) (Cavia porcellus (Guinea pig)).